A 118-amino-acid polypeptide reads, in one-letter code: Small ribosomal subunit protein uS13 (118 aa).

A disordered region spans residues 91–118 (HRRGLPVRGQRTKTNARTRKGPRKPIKK).

This sequence belongs to the universal ribosomal protein uS13 family. As to quaternary structure, part of the 30S ribosomal subunit. Forms a loose heterodimer with protein S19. Forms two bridges to the 50S subunit in the 70S ribosome.

Functionally, located at the top of the head of the 30S subunit, it contacts several helices of the 16S rRNA. In the 70S ribosome it contacts the 23S rRNA (bridge B1a) and protein L5 of the 50S subunit (bridge B1b), connecting the 2 subunits; these bridges are implicated in subunit movement. Contacts the tRNAs in the A and P-sites. This is Small ribosomal subunit protein uS13 from Hamiltonella defensa subsp. Acyrthosiphon pisum (strain 5AT).